We begin with the raw amino-acid sequence, 258 residues long: UPF0246 protein YaaA (258 aa).

Belongs to the UPF0246 family.

This chain is UPF0246 protein YaaA, found in Escherichia coli O7:K1 (strain IAI39 / ExPEC).